A 453-amino-acid chain; its full sequence is MHKQELPRAQKLAERAFANLERFLHIEAVSGIVLLIAAVAALIWANSPAADSYEALWHTPLTFGVGSHVYSQSLHFWINDGLMTIFFLVVGMEIRREIHEGALSSLRQATLPMAAAVGGVAVPALLYLSFGHAPADQQGWAVPTATDIAFAVGVLALLGKSIPSNVRVFLLALAIIDDIIAVLIIAFFYSGGLDYTGFGVAVIGLLMVIGLQKIGVGSAYAYVIPGAIVWLGILLTGAHPTLAGVVLGLMTPVTAMPMRERPLDAITRFTGELLGRAKAPEQDASDLMDPLKRLRLAQRELLPPVVRMQGTLHPWVAFGIMPVFALANAGVSLSGVDLSAEGPQWVMIAVAVALVAGKPLGIVSVSWLMVRLGWCVLPAEVNWRSIMLVGLLAGIGFTMSIFIANLAFVDPGSLGAAKLGVLSASLIAAVLGLTWGVWSMRSAASATKAGSPT.

12 helical membrane-spanning segments follow: residues 23–43, 74–94, 111–131, 139–159, 168–188, 191–211, 214–234, 235–255, 316–336, 345–365, 386–406, and 419–439; these read FLHI…AALI, LHFW…GMEI, LPMA…LSFG, GWAV…ALLG, VFLL…IAFF, GGLD…VIGL, IGVG…LGIL, LTGA…PVTA, VAFG…LSGV, WVMI…IVSV, IMLV…IANL, and LGVL…GVWS.

It belongs to the NhaA Na(+)/H(+) (TC 2.A.33) antiporter family.

The protein resides in the cell inner membrane. It catalyses the reaction Na(+)(in) + 2 H(+)(out) = Na(+)(out) + 2 H(+)(in). Its function is as follows. Na(+)/H(+) antiporter that extrudes sodium in exchange for external protons. In Pseudomonas putida (strain ATCC 47054 / DSM 6125 / CFBP 8728 / NCIMB 11950 / KT2440), this protein is Na(+)/H(+) antiporter NhaA 2.